The following is a 308-amino-acid chain: Elongation factor Ts (308 aa).

The tract at residues 80–83 is involved in Mg(2+) ion dislocation from EF-Tu; sequence TDFV.

Belongs to the EF-Ts family.

The protein resides in the cytoplasm. Functionally, associates with the EF-Tu.GDP complex and induces the exchange of GDP to GTP. It remains bound to the aminoacyl-tRNA.EF-Tu.GTP complex up to the GTP hydrolysis stage on the ribosome. The sequence is that of Elongation factor Ts from Rhizobium etli (strain ATCC 51251 / DSM 11541 / JCM 21823 / NBRC 15573 / CFN 42).